A 382-amino-acid chain; its full sequence is Galactokinase (382 aa).

Substrate is bound at residue 34–37; sequence EHTD. 124 to 130 serves as a coordination point for ATP; that stretch reads GAGLSSS. The Mg(2+) site is built by Ser130 and Glu162. Asp174 acts as the Proton acceptor in catalysis. Tyr223 provides a ligand contact to substrate.

Belongs to the GHMP kinase family. GalK subfamily.

The protein resides in the cytoplasm. It carries out the reaction alpha-D-galactose + ATP = alpha-D-galactose 1-phosphate + ADP + H(+). It functions in the pathway carbohydrate metabolism; galactose metabolism. In terms of biological role, catalyzes the transfer of the gamma-phosphate of ATP to D-galactose to form alpha-D-galactose-1-phosphate (Gal-1-P). The chain is Galactokinase from Aeromonas hydrophila subsp. hydrophila (strain ATCC 7966 / DSM 30187 / BCRC 13018 / CCUG 14551 / JCM 1027 / KCTC 2358 / NCIMB 9240 / NCTC 8049).